Here is a 651-residue protein sequence, read N- to C-terminus: Probable potassium transport system protein Kup 3 (651 aa).

12 helical membrane passes run 38–58 (FWALTLGGIGVVFGDIGTSPL), 77–97 (VLVLGVLSLILWALLIVVTAK), 129–149 (LFLLVLGVIGASMFIGDSMIT), 166–186 (PALEHYVVPLTVLVLVLLFGV), 197–217 (FFGPVMLVWFATLAAMGAMHI), 242–262 (IGLVTLGAVFLAVTGGEALYA), 276–296 (WLGFVLPALLINYFGQGALVL), 314–334 (LVLPLTLMATAATVIASQAVI), 366–386 (IYLPRVNALLLIGVLLLVLLF), 396–416 (YGIAVSTTMVVDGIMGFVVIW), 421–441 (WSWPAAALVILPLVLVDAMFF), and 448–468 (LLDGAWVPLLFGLAMAVVIWT).

This sequence belongs to the HAK/KUP transporter (TC 2.A.72) family.

It localises to the cell inner membrane. The enzyme catalyses K(+)(in) + H(+)(in) = K(+)(out) + H(+)(out). Transport of potassium into the cell. Likely operates as a K(+):H(+) symporter. The sequence is that of Probable potassium transport system protein Kup 3 from Rhodopseudomonas palustris (strain ATCC BAA-98 / CGA009).